The following is a 348-amino-acid chain: Protein RecA (348 aa).

64-71 serves as a coordination point for ATP; that stretch reads GPESSGKT.

Belongs to the RecA family.

The protein localises to the cytoplasm. Functionally, can catalyze the hydrolysis of ATP in the presence of single-stranded DNA, the ATP-dependent uptake of single-stranded DNA by duplex DNA, and the ATP-dependent hybridization of homologous single-stranded DNAs. It interacts with LexA causing its activation and leading to its autocatalytic cleavage. The protein is Protein RecA of Blastochloris viridis (Rhodopseudomonas viridis).